Here is a 431-residue protein sequence, read N- to C-terminus: Glucose-1-phosphate adenylyltransferase (431 aa).

Lysine 39 is a binding site for beta-D-fructose 1,6-bisphosphate. Positions 40, 46, and 52 each coordinate AMP. Tyrosine 114 serves as a coordination point for alpha-D-glucose 1-phosphate. AMP is bound at residue arginine 130. Residues glycine 179, 194 to 195 (EK), and serine 212 each bind alpha-D-glucose 1-phosphate. AMP is bound at residue arginine 386. A beta-D-fructose 1,6-bisphosphate-binding site is contributed by 429 to 431 (QER).

It belongs to the bacterial/plant glucose-1-phosphate adenylyltransferase family. As to quaternary structure, homotetramer.

The catalysed reaction is alpha-D-glucose 1-phosphate + ATP + H(+) = ADP-alpha-D-glucose + diphosphate. The protein operates within glycan biosynthesis; glycogen biosynthesis. With respect to regulation, allosterically activated by fructose-1,6-bisphosphate (F16BP) and inhibited by AMP. Functionally, involved in the biosynthesis of ADP-glucose, a building block required for the elongation reactions to produce glycogen. Catalyzes the reaction between ATP and alpha-D-glucose 1-phosphate (G1P) to produce pyrophosphate and ADP-Glc. The protein is Glucose-1-phosphate adenylyltransferase of Klebsiella pneumoniae (strain 342).